A 432-amino-acid chain; its full sequence is Serine/threonine-protein kinase Sgk1 (432 aa).

The disordered stretch occupies residues 67-93; it reads PELMNANPSPPPSPSQQINLGPSSNPH. Polar residues predominate over residues 82-92; the sequence is QQINLGPSSNP. The 258-residue stretch at 99–356 folds into the Protein kinase domain; sequence FHFLKVIGKG…FTEIKNHIFF (258 aa). Residues 105–113 and Lys-128 each bind ATP; that span reads IGKGSFGKV. The active-site Proton acceptor is Asp-223. Residues 357–432 enclose the AGC-kinase C-terminal domain; sequence SPINWDDLIN…SYAPPVDSFL (76 aa).

This sequence belongs to the protein kinase superfamily. AGC Ser/Thr protein kinase family.

The protein localises to the cytoplasm. The protein resides in the nucleus. It is found in the endoplasmic reticulum. The enzyme catalyses L-seryl-[protein] + ATP = O-phospho-L-seryl-[protein] + ADP + H(+). It catalyses the reaction L-threonyl-[protein] + ATP = O-phospho-L-threonyl-[protein] + ADP + H(+). Its function is as follows. Protein kinase that may play an important role in cellular stress response. May be involved in the regulation of processes such as cell survival, neuronal excitability and renal sodium excretion. The polypeptide is Serine/threonine-protein kinase Sgk1 (SGK1) (Gallus gallus (Chicken)).